A 512-amino-acid chain; its full sequence is Immunoglobulin delta heavy chain (512 aa).

Ig-like domains are found at residues 1–97 and 135–227; these read RLQL…MYYC and PDVF…KEIF. The variable (V) domain, involved in antigen recognition stretch occupies residues 1-129; it reads RLQLQESGPG…GQGTTVHVSS (129 aa). 2 disulfides stabilise this stretch: cysteine 22-cysteine 97 and cysteine 157-cysteine 213. The interval 130 to 512 is constant (C) domain; sequence APTKAPDVFP…VSYVTDHGPM (383 aa). A disordered region spans residues 225-296; sequence EIFRWPESPK…TPECPSHTQP (72 aa). A compositionally biased stretch (polar residues) spans 235–247; it reads AQASSVPTAQPQA. Serine 238 carries an O-linked (GalNAc...) serine glycan. 4 O-linked (GalNAc...) threonine glycosylation sites follow: threonine 255, threonine 256, threonine 260, and threonine 261. Positions 267 to 287 are enriched in basic and acidic residues; it reads GGEEKKKEKEKEEQEERETKT. Ig-like domains lie at 304-392 and 396-502; these read PAVQ…RLMA and PAAQ…RSLE. 2 cysteine pairs are disulfide-bonded: cysteine 319–cysteine 378 and cysteine 423–cysteine 484. N-linked (GlcNAc...) asparagine glycans are attached at residues asparagine 354, asparagine 445, and asparagine 496.

As to quaternary structure, immunoglobulins are composed of two identical heavy chains and two identical light chains; disulfide-linked. An IgD molecule contains thus a delta heavy chain combined with either a kappa or a lambda light chains. Kappa light chains are found predominantly on the membrane IgD (mIgD) form and lambda on the secreted IgD (sIgD) form, this fact is poorly understood. Membrane-bound IgD molecules are non-covalently associated with a heterodimer of CD79A and CD79B.

Its subcellular location is the secreted. It localises to the cell membrane. Its function is as follows. Immunoglobulins, also known as antibodies, are membrane-bound or secreted glycoproteins produced by B lymphocytes. In the recognition phase of humoral immunity, the membrane-bound immunoglobulins serve as receptors which, upon binding of a specific antigen, trigger the clonal expansion and differentiation of B lymphocytes into immunoglobulins-secreting plasma cells. Secreted immunoglobulins mediate the effector phase of humoral immunity, which results in the elimination of bound antigens. The antigen binding site is formed by the variable domain of one heavy chain, together with that of its associated light chain. Thus, each immunoglobulin has two antigen binding sites with remarkable affinity for a particular antigen. The variable domains are assembled by a process called V-(D)-J rearrangement and can then be subjected to somatic hypermutations which, after exposure to antigen and selection, allow affinity maturation for a particular antigen. IgD is the major antigen receptor isotype on the surface of most peripheral B cells, where it is coexpressed with IgM. The membrane-bound IgD (mIgD) induces the phosphorylation of CD79A and CD79B by the Src family of protein tyrosine kinases. Soluble IgD (sIgD) concentration in serum is below those of IgG, IgA, and IgM but much higher than that of IgE. IgM and IgD molecules present on B cells have identical V regions and antigen-binding sites. After the antigen binds to the B cell receptor, the secreted form sIgD is shut off. IgD is a potent inducer of TNF, IL1B, and IL1RN. IgD also induces release of IL6, IL10, and LIF from peripheral blood mononuclear cells. Monocytes seem to be the main producers of cytokines in vitro in the presence of IgD. This Homo sapiens (Human) protein is Immunoglobulin delta heavy chain.